The primary structure comprises 103 residues: uncharacterized protein (103 aa).

The next 2 helical transmembrane spans lie at 42 to 62 (PFPL…VLLA) and 65 to 85 (TGTL…FICA).

The protein resides in the membrane. This is an uncharacterized protein from Saccharomyces cerevisiae (strain ATCC 204508 / S288c) (Baker's yeast).